A 50-amino-acid polypeptide reads, in one-letter code: Large ribosomal subunit protein bL33 (50 aa).

It belongs to the bacterial ribosomal protein bL33 family.

This is Large ribosomal subunit protein bL33 (rpmG) from Aquifex aeolicus (strain VF5).